The sequence spans 79 residues: Small ribosomal subunit protein bS18 (79 aa).

Belongs to the bacterial ribosomal protein bS18 family. As to quaternary structure, part of the 30S ribosomal subunit. Forms a tight heterodimer with protein bS6.

Binds as a heterodimer with protein bS6 to the central domain of the 16S rRNA, where it helps stabilize the platform of the 30S subunit. This chain is Small ribosomal subunit protein bS18, found in Micrococcus luteus (strain ATCC 4698 / DSM 20030 / JCM 1464 / CCM 169 / CCUG 5858 / IAM 1056 / NBRC 3333 / NCIMB 9278 / NCTC 2665 / VKM Ac-2230) (Micrococcus lysodeikticus).